Reading from the N-terminus, the 206-residue chain is Small ribosomal subunit protein uS4 (206 aa).

The S4 RNA-binding domain maps to 96–159 (SRLDNVVYRM…KKQARIVEGL (64 aa)).

The protein belongs to the universal ribosomal protein uS4 family. In terms of assembly, part of the 30S ribosomal subunit. Contacts protein S5. The interaction surface between S4 and S5 is involved in control of translational fidelity.

Its function is as follows. One of the primary rRNA binding proteins, it binds directly to 16S rRNA where it nucleates assembly of the body of the 30S subunit. Functionally, with S5 and S12 plays an important role in translational accuracy. This Chromobacterium violaceum (strain ATCC 12472 / DSM 30191 / JCM 1249 / CCUG 213 / NBRC 12614 / NCIMB 9131 / NCTC 9757 / MK) protein is Small ribosomal subunit protein uS4.